The following is a 498-amino-acid chain: U4/U6 small nuclear ribonucleoprotein Prp31 (498 aa).

Residues 1-24 (MSLADELLADLEEAAEEEEENLID) form a disordered region. The segment covering 7-24 (LLADLEEAAEEEEENLID) has biased composition (acidic residues). 2 coiled-coil regions span residues 84-119 (EAAP…KYSK) and 180-214 (DEEL…MSFI). The region spanning 214–332 (IAPNLSIIVG…IERKFDKWQE (119 aa)) is the Nop domain. The interval 333–356 (PPPVKQVKPLPAPLDGQRKKRGGR) is disordered. The short motif at 350 to 363 (RKKRGGRRYRKMKE) is the Nuclear localization signal (NLS) element.

It belongs to the PRP31 family. Identified in the spliceosome B complex. Component of the U4/U6-U5 tri-snRNP complex. Component of some MLL1/MLL complex.

It localises to the nucleus. The protein localises to the nucleus speckle. The protein resides in the cajal body. Involved in pre-mRNA splicing as component of the spliceosome. Required for the assembly of the U4/U5/U6 tri-snRNP complex, one of the building blocks of the spliceosome. This chain is U4/U6 small nuclear ribonucleoprotein Prp31 (prpf31), found in Xenopus laevis (African clawed frog).